Here is a 989-residue protein sequence, read N- to C-terminus: DNA-binding protein SMUBP-2 (989 aa).

Alanine 2 carries the N-acetylalanine modification. Residues 213 to 220 (GPPGTGKT), glutamine 402, tyrosine 441, and glutamate 570 contribute to the ATP site. The tract at residues 637-783 (TAFEYLDDIV…KARHITVSRK (147 aa)) is SS DNA-binding. 3 disordered regions span residues 650 to 717 (YTHE…GCDR), 765 to 818 (LRHD…GQPH), and 833 to 869 (LQRQ…TKGP). A compositionally biased stretch (low complexity) spans 677-690 (EQENGQEARAAAGQ). Residues 721–784 (IDRTEHFRAM…ARHITVSRKS (64 aa)) enclose the R3H domain. A compositionally biased stretch (basic and acidic residues) spans 765 to 775 (LRHDSTGEGKA). A phosphoserine mark is found at serine 797 and serine 800. Low complexity predominate over residues 833–842 (LQRQQGSQAQ). The Nuclear localization signal signature appears at 860–864 (KKKKK). The AN1-type zinc finger occupies 885-934 (IKADNTCSFAKCTASTTTLGQFCMHCSRRYCLSHHLPEIHGCGEKARAHA). Residues cysteine 891, cysteine 896, cysteine 907, cysteine 910, cysteine 915, histidine 918, histidine 924, and cysteine 926 each coordinate Zn(2+). The span at 954–972 (ALDPAKRAQLQRRLDKKLG) shows a compositional bias: basic and acidic residues. Positions 954–989 (ALDPAKRAQLQRRLDKKLGELSSQRTSKRKEKERGT) are disordered.

This sequence belongs to the DNA2/NAM7 helicase family. In terms of assembly, homooligomer. Interacts with RUVBL1. Interacts with RUVBL2. Interacts with GTF3C1. Interacts with ABT1. Interacts with ribosomes. In terms of tissue distribution, high expression in brain and testis, moderate in heart, spleen, and kidney, and low in other tissues.

Its subcellular location is the nucleus. The protein resides in the cytoplasm. The protein localises to the cell projection. It is found in the axon. The catalysed reaction is ATP + H2O = ADP + phosphate + H(+). In terms of biological role, 5' to 3' helicase that unwinds RNA and DNA duplexes in an ATP-dependent reaction. Specific to 5'-phosphorylated single-stranded guanine-rich sequences. May play a role in RNA metabolism, ribosome biogenesis or initiation of translation. May play a role in regulation of transcription. Interacts with tRNA-Tyr. This Mesocricetus auratus (Golden hamster) protein is DNA-binding protein SMUBP-2 (IGHMBP2).